Reading from the N-terminus, the 269-residue chain is Transmembrane protein 41B (269 aa).

6 consecutive transmembrane segments (helical) span residues 30–50 (TSLLILVSIFTIAAFLMFLVY), 87–107 (FYVQVLVAYFATYVFLQTFAI), 125–147 (LALFLVCLCSGLGASFCYMLSYL), 175–195 (LINYIIFLRITPFLPNWFINI), 203–223 (PLKVFFIGTFLGVAPPSFVAI), and 240–260 (SWNSLFVLMILAILSILPALF). The segment at 118 to 229 (GFLYPFPLAL…FVAIKAGTTL (112 aa)) is VTT domain; required for its function in autophagy.

The protein belongs to the TMEM41 family.

The protein resides in the endoplasmic reticulum membrane. Its subcellular location is the endomembrane system. It carries out the reaction a 1,2-diacyl-sn-glycero-3-phospho-L-serine(in) = a 1,2-diacyl-sn-glycero-3-phospho-L-serine(out). The enzyme catalyses cholesterol(in) = cholesterol(out). The catalysed reaction is a 1,2-diacyl-sn-glycero-3-phosphocholine(in) = a 1,2-diacyl-sn-glycero-3-phosphocholine(out). It catalyses the reaction a 1,2-diacyl-sn-glycero-3-phosphoethanolamine(in) = a 1,2-diacyl-sn-glycero-3-phosphoethanolamine(out). Its function is as follows. Phospholipid scramblase involved in lipid homeostasis and membrane dynamics processes. Has phospholipid scramblase activity toward cholesterol and phosphatidylserine, as well as phosphatidylethanolamine and phosphatidylcholine. Required for autophagosome formation: participates in early stages of autophagosome biogenesis at the endoplasmic reticulum (ER) membrane by reequilibrating the leaflets of the ER as lipids are extracted by ATG2 (ATG2A or ATG2B) to mediate autophagosome assembly. In addition to autophagy, involved in other processes in which phospholipid scramblase activity is required. Required for normal motor neuron development. The sequence is that of Transmembrane protein 41B from Gallus gallus (Chicken).